The sequence spans 218 residues: Ribose-5-phosphate isomerase A (218 aa).

Residues 28–31, 81–84, and 94–97 contribute to the substrate site; these read TGST, DGAD, and KGGG. Glutamate 103 (proton acceptor) is an active-site residue. Lysine 121 lines the substrate pocket.

It belongs to the ribose 5-phosphate isomerase family. In terms of assembly, homodimer.

It catalyses the reaction aldehydo-D-ribose 5-phosphate = D-ribulose 5-phosphate. It participates in carbohydrate degradation; pentose phosphate pathway; D-ribose 5-phosphate from D-ribulose 5-phosphate (non-oxidative stage): step 1/1. Its function is as follows. Catalyzes the reversible conversion of ribose-5-phosphate to ribulose 5-phosphate. The chain is Ribose-5-phosphate isomerase A from Vibrio atlanticus (strain LGP32) (Vibrio splendidus (strain Mel32)).